The primary structure comprises 749 residues: Transcription factor RFX3 (749 aa).

Positions H183 to P258 form a DNA-binding region, RFX-type winged-helix.

It belongs to the RFX family.

The protein localises to the nucleus. Transcription factor required for ciliogenesis and islet cell differentiation during endocrine pancreas development. The sequence is that of Transcription factor RFX3 (rfx3) from Xenopus tropicalis (Western clawed frog).